The following is a 510-amino-acid chain: MIWHVQNENFILDSTRIFMKAFHLLLFHGSFIFPECILIFGLILLLMIDSTSDQKDIPWLYFISSTSLVMSITALLFRWREEPMISFSGNFQTNNFNEIFQFLILLCSTLCIPLSVEYIECTEMAITEFLLFVLTATLGGMFLCGANDSITIFVAPECFSLCSYLLSGYTKRDVRSNEATTKYLLMGGASSSILVHGFSWLYGSSGGEIELQEIVNGLIKTQMYNSPGISIALIFITVGIGFKLSPAPSHQWTPDVYEGSPTPVVAFLSVTSKVAASASATRIFDIPFYFSSNEWHLLLEILAILSMILGNLIAITQTSMKRMLAYSSIGQIGYVIIGIIVGDSNDGYASMITYMLFYISMNLGTFARIVSFGLRTGTDNIRDYAGLYTKDPFLALSSALCLLSLGGLPPLAGFFGKLHLFWCGWQAGLYFLVSIGLLTSVVSIYYYLKIIKLLMTGRNQEITPHVRNYRRSPLRSNNSIELSMIVCVIASTIPGISMNPIIAIAQDTLF.

Helical transmembrane passes span 24 to 44, 57 to 77, 99 to 119, 124 to 144, 150 to 170, 183 to 203, 227 to 247, 295 to 315, 323 to 343, 347 to 367, 395 to 415, 418 to 438, and 484 to 504; these read LLLF…GLIL, IPWL…ALLF, IFQF…VEYI, MAIT…MFLC, ITIF…SGYT, YLLM…WLYG, PGIS…LSPA, WHLL…LIAI, MLAY…IVGD, GYAS…GTFA, ALSS…AGFF, LHLF…IGLL, and MIVC…IIAI.

Belongs to the complex I subunit 2 family. As to quaternary structure, NDH is composed of at least 16 different subunits, 5 of which are encoded in the nucleus.

It is found in the plastid. The protein localises to the chloroplast thylakoid membrane. It catalyses the reaction a plastoquinone + NADH + (n+1) H(+)(in) = a plastoquinol + NAD(+) + n H(+)(out). The catalysed reaction is a plastoquinone + NADPH + (n+1) H(+)(in) = a plastoquinol + NADP(+) + n H(+)(out). In terms of biological role, NDH shuttles electrons from NAD(P)H:plastoquinone, via FMN and iron-sulfur (Fe-S) centers, to quinones in the photosynthetic chain and possibly in a chloroplast respiratory chain. The immediate electron acceptor for the enzyme in this species is believed to be plastoquinone. Couples the redox reaction to proton translocation, and thus conserves the redox energy in a proton gradient. The protein is NAD(P)H-quinone oxidoreductase subunit 2 B, chloroplastic of Liriodendron tulipifera (Tuliptree).